Here is a 591-residue protein sequence, read N- to C-terminus: Transcriptional regulator PUL4 (591 aa).

Residues 3-29 (CLECKKRKQKCDGQKPCRRCTKLNVKC) constitute a DNA-binding region (zn(2)-C6 fungal-type).

It localises to the nucleus. Its function is as follows. Transcription factor involved in regulation of the PUL gene cluster that mediates the formation of pulcherrimin, a red iron-containing pigment composed of two cyclized and modified leucine molecules that acts as a siderophore, a chelator that binds iron outside the cell for subsequent uptake. The protein is Transcriptional regulator PUL4 of Kluyveromyces lactis (strain ATCC 8585 / CBS 2359 / DSM 70799 / NBRC 1267 / NRRL Y-1140 / WM37) (Yeast).